We begin with the raw amino-acid sequence, 430 residues long: S-adenosylmethionine synthase (430 aa).

His-14 is an ATP binding site. Asp-16 lines the Mg(2+) pocket. K(+) is bound at residue Glu-42. 2 residues coordinate L-methionine: Glu-55 and Gln-98. The segment at 98–108 is flexible loop; sequence QSADINRGVER. Residues 164 to 166, 254 to 255, Asp-263, 269 to 270, Ala-286, and Lys-290 contribute to the ATP site; these read DAK, KF, and RK. An L-methionine-binding site is contributed by Asp-263. Lys-294 contributes to the L-methionine binding site.

This sequence belongs to the AdoMet synthase family. Homotetramer; dimer of dimers. Mg(2+) serves as cofactor. The cofactor is K(+).

It localises to the cytoplasm. The catalysed reaction is L-methionine + ATP + H2O = S-adenosyl-L-methionine + phosphate + diphosphate. The protein operates within amino-acid biosynthesis; S-adenosyl-L-methionine biosynthesis; S-adenosyl-L-methionine from L-methionine: step 1/1. Functionally, catalyzes the formation of S-adenosylmethionine (AdoMet) from methionine and ATP. The overall synthetic reaction is composed of two sequential steps, AdoMet formation and the subsequent tripolyphosphate hydrolysis which occurs prior to release of AdoMet from the enzyme. This chain is S-adenosylmethionine synthase, found in Bacteroides fragilis (strain ATCC 25285 / DSM 2151 / CCUG 4856 / JCM 11019 / LMG 10263 / NCTC 9343 / Onslow / VPI 2553 / EN-2).